The sequence spans 97 residues: MTDLRHYDVIVSPVITEKSTMVSEHNQVVFNVARKATKPEIKAAVEALFGVKVTAVNTAVRKGKVKRFRGLIGRQSDVKKAIVTLAEGQSIDVSTGL.

It belongs to the universal ribosomal protein uL23 family. Part of the 50S ribosomal subunit. Contacts protein L29, and trigger factor when it is bound to the ribosome.

In terms of biological role, one of the early assembly proteins it binds 23S rRNA. One of the proteins that surrounds the polypeptide exit tunnel on the outside of the ribosome. Forms the main docking site for trigger factor binding to the ribosome. The polypeptide is Large ribosomal subunit protein uL23 (Brucella anthropi (strain ATCC 49188 / DSM 6882 / CCUG 24695 / JCM 21032 / LMG 3331 / NBRC 15819 / NCTC 12168 / Alc 37) (Ochrobactrum anthropi)).